A 650-amino-acid chain; its full sequence is Putative polypeptide N-acetylgalactosaminyltransferase 9 (650 aa).

The Cytoplasmic portion of the chain corresponds to 1–11 (MAFIWRRRSTT). Residues 12–31 (IVKLVAFALAIWFCIAFLVY) traverse the membrane as a helical; Signal-anchor for type II membrane protein segment. Topologically, residues 32-650 (TDDTRRRAAQ…TLENYDSSKL (619 aa)) are lumenal. The disordered stretch occupies residues 84–154 (NVIGGGGQKQ…NPGELGKPVR (71 aa)). Basic and acidic residues predominate over residues 107–136 (HKADLQAERMRKKAAEQPKKKPQEDSKKVI). Disulfide bonds link Cys-198/Cys-432, Cys-423/Cys-499, Cys-535/Cys-554, Cys-577/Cys-590, and Cys-616/Cys-631. The catalytic subdomain A stretch occupies residues 208-317 (LPKTDVIICF…EGWLEPLLDR (110 aa)). The substrate site is built by Cys-216, Asp-249, and Arg-278. Asp-301 contacts Mn(2+). Substrate-binding residues include Ser-302 and His-303. His-303 is a binding site for Mn(2+). N-linked (GlcNAc...) asparagine glycans are attached at residues Asn-321 and Asn-373. Residues 378 to 440 (PVYSPTMAGG…PCSHVGHIFR (63 aa)) form a catalytic subdomain B region. His-437 contacts Mn(2+). Arg-440 and Tyr-445 together coordinate substrate. A Ricin B-type lectin domain is found at 521 to 643 (AHGEIRNLGY…SLSRQQWTLE (123 aa)).

The protein belongs to the glycosyltransferase 2 family. GalNAc-T subfamily. As to quaternary structure, isoform A forms homotetramer. Isoform B forms homodimer. Mn(2+) serves as cofactor.

The protein localises to the golgi apparatus membrane. It catalyses the reaction L-seryl-[protein] + UDP-N-acetyl-alpha-D-galactosamine = a 3-O-[N-acetyl-alpha-D-galactosaminyl]-L-seryl-[protein] + UDP + H(+). The enzyme catalyses L-threonyl-[protein] + UDP-N-acetyl-alpha-D-galactosamine = a 3-O-[N-acetyl-alpha-D-galactosaminyl]-L-threonyl-[protein] + UDP + H(+). The protein operates within protein modification; protein glycosylation. Catalyzes the initial reaction in O-linked oligosaccharide biosynthesis, the transfer of an N-acetyl-D-galactosamine residue to a serine or threonine residue on the protein receptor. It can both act as a peptide transferase that transfers GalNAc onto unmodified peptide substrates, and as a glycopeptide transferase that requires the prior addition of a GalNAc on a peptide before adding additional GalNAc moieties. In terms of biological role, N-acetylgalactosaminyltransferase which preferentially O-glycosylates negatively charge substrates. O-glycosylates mucin-like protein Sgs3 in the salivary gland but to a lesser extent than isoform B. By regulating the O-glycosylation of secretory cargo proteins plays a role in the morphology and maturation of salivary gland secretory granules. Its function is as follows. N-acetylgalactosaminyltransferase which preferentially O-glycosylates positively charge substrates. O-glycosylates mucin-like protein Sgs3 in the salivary gland. By regulating the O-glycosylation of secretory cargo proteins, plays a role in the morphology and maturation of salivary gland secretory granules. This Drosophila melanogaster (Fruit fly) protein is Putative polypeptide N-acetylgalactosaminyltransferase 9.